Consider the following 400-residue polypeptide: Involucrin (400 aa).

Disordered stretches follow at residues 1–196 (MSQQ…HLKQ), 273–312 (KEEV…EQQL), and 333–381 (KRDE…KGEV). Low complexity-rich tracts occupy residues 78 to 159 (QQQQ…QQHQ), 169 to 186 (EQQQ…GQQE), and 279 to 292 (EQQQ…QQHQ). Basic and acidic residues predominate over residues 333-344 (KRDEQLGKKEEQ). Positions 346–358 (LEPSEQQEGLLEQ) are enriched in low complexity.

The protein belongs to the involucrin family. In terms of assembly, directly or indirectly cross-linked to cornifelin (CNFN). In terms of processing, substrate of transglutaminase. Specific glutamines or lysines are cross-linked to keratins, desmoplakin and to inter involucrin molecules. As to expression, keratinocytes of epidermis and other stratified squamous epithelia.

Its subcellular location is the cytoplasm. Functionally, part of the insoluble cornified cell envelope (CE) of stratified squamous epithelia. The chain is Involucrin (IVL) from Tupaia glis (Common tree shrew).